The following is a 154-amino-acid chain: U1 small nuclear ribonucleoprotein C (154 aa).

A Matrin-type zinc finger spans residues 4–36; the sequence is YYCDYCDTYLTHDSPSVRKTHCTGRKHKDNVKF.

This sequence belongs to the U1 small nuclear ribonucleoprotein C family. In terms of assembly, U1 snRNP is composed of the 7 core Sm proteins B/B', D1, D2, D3, E, F and G that assemble in a heptameric protein ring on the Sm site of the small nuclear RNA to form the core snRNP, and at least 3 U1 snRNP-specific proteins U1-70K, U1-A and U1-C. U1-C interacts with U1 snRNA and the 5' splice-site region of the pre-mRNA.

Its subcellular location is the nucleus. Component of the spliceosomal U1 snRNP, which is essential for recognition of the pre-mRNA 5' splice-site and the subsequent assembly of the spliceosome. U1-C is directly involved in initial 5' splice-site recognition for both constitutive and regulated alternative splicing. The interaction with the 5' splice-site seems to precede base-pairing between the pre-mRNA and the U1 snRNA. Stimulates commitment or early (E) complex formation by stabilizing the base pairing of the 5' end of the U1 snRNA and the 5' splice-site region. The polypeptide is U1 small nuclear ribonucleoprotein C (Aedes aegypti (Yellowfever mosquito)).